We begin with the raw amino-acid sequence, 263 residues long: Putative SNAP25 homologous protein SNAP30 (263 aa).

Disordered regions lie at residues 1 to 61 and 132 to 209; these read MFGF…LQSQ and NLGG…DGLS. Composition is skewed to polar residues over residues 8-34 and 52-61; these read PGNN…TSSE and FNDSGGLQSQ. Residues 158 to 173 are compositionally biased toward basic and acidic residues; the sequence is KPSKKSENHKEEREKL. Residues 180–194 show a composition bias toward polar residues; the sequence is RSSSQPALDQPTNAL. Residues 197–206 show a composition bias toward basic and acidic residues; sequence VEQEKAKQDD. The t-SNARE coiled-coil homology domain occupies 198 to 260; sequence EQEKAKQDDG…QGANQRARHL (63 aa).

The protein belongs to the SNAP-25 family.

Its subcellular location is the membrane. The protein resides in the cytoplasm. In terms of biological role, vesicle trafficking protein that functions in the secretory pathway. The sequence is that of Putative SNAP25 homologous protein SNAP30 (SNAP30) from Arabidopsis thaliana (Mouse-ear cress).